A 197-amino-acid polypeptide reads, in one-letter code: Phosphoheptose isomerase (197 aa).

Residues 36–197 enclose the SIS domain; sequence MVQCLVSEGK…IDQQLFGSTE (162 aa). 51 to 53 contributes to the substrate binding site; the sequence is NGG. Zn(2+) is bound by residues His60 and Glu64. Residues Glu64, 93 to 94, 119 to 121, Ser124, and Gln174 each bind substrate; these read ND and STS. Residues Gln174 and His182 each coordinate Zn(2+).

Belongs to the SIS family. GmhA subfamily. As to quaternary structure, homotetramer. Zn(2+) is required as a cofactor.

The protein resides in the cytoplasm. It catalyses the reaction 2 D-sedoheptulose 7-phosphate = D-glycero-alpha-D-manno-heptose 7-phosphate + D-glycero-beta-D-manno-heptose 7-phosphate. It participates in carbohydrate biosynthesis; D-glycero-D-manno-heptose 7-phosphate biosynthesis; D-glycero-alpha-D-manno-heptose 7-phosphate and D-glycero-beta-D-manno-heptose 7-phosphate from sedoheptulose 7-phosphate: step 1/1. Catalyzes the isomerization of sedoheptulose 7-phosphate in D-glycero-D-manno-heptose 7-phosphate. The polypeptide is Phosphoheptose isomerase (Chromohalobacter salexigens (strain ATCC BAA-138 / DSM 3043 / CIP 106854 / NCIMB 13768 / 1H11)).